The chain runs to 227 residues: Prolactin (227 aa).

The first 28 residues, 1-28 (MDSKWSRRTGSLLLLLVSNLLLCKSTAS), serve as a signal peptide directing secretion. A disulfide bond links cysteine 32 and cysteine 39. Serine 54, serine 62, and serine 118 each carry phosphoserine. 2 disulfides stabilise this stretch: cysteine 86–cysteine 202 and cysteine 219–cysteine 227.

This sequence belongs to the somatotropin/prolactin family. Interacts with PRLR.

The protein resides in the secreted. In terms of biological role, prolactin acts primarily on the mammary gland by promoting lactation. The sequence is that of Prolactin (PRL) from Oryctolagus cuniculus (Rabbit).